Here is a 112-residue protein sequence, read N- to C-terminus: DNA-binding protein TON_1102 (112 aa).

It belongs to the PDCD5 family.

This Thermococcus onnurineus (strain NA1) protein is DNA-binding protein TON_1102.